A 111-amino-acid polypeptide reads, in one-letter code: MYDSIMSVSARNALSRLSETVAEKGVGSASAPQAVPAAPGASFGEVLSQMTGSVSQKLQAAEATSIQGIKGDAPVRDVVSSVMEAEQSLQTVIAIRDKIVQAYLEISRMPI.

This sequence belongs to the FliE family.

It localises to the bacterial flagellum basal body. The sequence is that of Flagellar hook-basal body complex protein FliE from Brucella ovis (strain ATCC 25840 / 63/290 / NCTC 10512).